Consider the following 391-residue polypeptide: Stearoyl-[acyl-carrier-protein] 9-desaturase 5, chloroplastic (391 aa).

The tract at residues 1–20 (MAFAPSHTASPSYCGVAQGG) is disordered. The transit peptide at 1–32 (MAFAPSHTASPSYCGVAQGGRRSNGMSPVVAM) directs the protein to the chloroplast. The Fe cation site is built by Glu-133, Glu-171, His-174, Glu-224, Glu-257, and His-260.

Belongs to the fatty acid desaturase type 2 family. As to quaternary structure, homodimer. Fe(2+) is required as a cofactor.

The protein localises to the plastid. It is found in the chloroplast. It catalyses the reaction octadecanoyl-[ACP] + 2 reduced [2Fe-2S]-[ferredoxin] + O2 + 2 H(+) = (9Z)-octadecenoyl-[ACP] + 2 oxidized [2Fe-2S]-[ferredoxin] + 2 H2O. It participates in lipid metabolism; fatty acid metabolism. In terms of biological role, converts stearoyl-ACP to oleoyl-ACP by introduction of a cis double bond between carbons 9 and 10 of the acyl chain. The sequence is that of Stearoyl-[acyl-carrier-protein] 9-desaturase 5, chloroplastic from Oryza sativa subsp. indica (Rice).